The sequence spans 183 residues: ATP synthase subunit delta (183 aa).

Belongs to the ATPase delta chain family. In terms of assembly, F-type ATPases have 2 components, F(1) - the catalytic core - and F(0) - the membrane proton channel. F(1) has five subunits: alpha(3), beta(3), gamma(1), delta(1), epsilon(1). F(0) has three main subunits: a(1), b(2) and c(10-14). The alpha and beta chains form an alternating ring which encloses part of the gamma chain. F(1) is attached to F(0) by a central stalk formed by the gamma and epsilon chains, while a peripheral stalk is formed by the delta and b chains.

It is found in the cell inner membrane. Its function is as follows. F(1)F(0) ATP synthase produces ATP from ADP in the presence of a proton or sodium gradient. F-type ATPases consist of two structural domains, F(1) containing the extramembraneous catalytic core and F(0) containing the membrane proton channel, linked together by a central stalk and a peripheral stalk. During catalysis, ATP synthesis in the catalytic domain of F(1) is coupled via a rotary mechanism of the central stalk subunits to proton translocation. In terms of biological role, this protein is part of the stalk that links CF(0) to CF(1). It either transmits conformational changes from CF(0) to CF(1) or is implicated in proton conduction. The sequence is that of ATP synthase subunit delta from Vesicomyosocius okutanii subsp. Calyptogena okutanii (strain HA).